Reading from the N-terminus, the 198-residue chain is Recombination protein RecR (198 aa).

A C4-type zinc finger spans residues 57 to 72 (CSVCGHITDKDPCYIC). Residues 80-175 (SVLCVVQESK…KVTRIAHGLP (96 aa)) form the Toprim domain.

Belongs to the RecR family.

May play a role in DNA repair. It seems to be involved in an RecBC-independent recombinational process of DNA repair. It may act with RecF and RecO. The polypeptide is Recombination protein RecR (Listeria innocua serovar 6a (strain ATCC BAA-680 / CLIP 11262)).